We begin with the raw amino-acid sequence, 232 residues long: Large ribosomal subunit protein uL1 (232 aa).

Belongs to the universal ribosomal protein uL1 family. Part of the 50S ribosomal subunit.

Binds directly to 23S rRNA. The L1 stalk is quite mobile in the ribosome, and is involved in E site tRNA release. In terms of biological role, protein L1 is also a translational repressor protein, it controls the translation of the L11 operon by binding to its mRNA. This is Large ribosomal subunit protein uL1 from Xanthomonas axonopodis pv. citri (strain 306).